A 398-amino-acid polypeptide reads, in one-letter code: Lysophosphatidylserine lipase ABHD12 (398 aa).

A compositionally biased stretch (basic and acidic residues) spans 1–15 (MRKRTEPVTLEHERC). The interval 1 to 24 (MRKRTEPVTLEHERCAASGSSSSG) is disordered. Over 1 to 74 (MRKRTEPVTL…RKSLWFRLRK (74 aa)) the chain is Cytoplasmic. The chain crosses the membrane as a helical span at residues 75–95 (ILLCVLGFYIAIPFLVKLCPG). The Extracellular segment spans residues 96 to 398 (IQAKLIFLNF…LGKSEPERQH (303 aa)). An N-linked (GlcNAc...) asparagine glycan is attached at asparagine 123. Serine 246 serves as the catalytic Nucleophile. Residues aspartate 333 and histidine 372 each act as charge relay system in the active site.

It belongs to the serine esterase family.

It is found in the endoplasmic reticulum membrane. The enzyme catalyses 1-(9Z-octadecenoyl)-sn-glycero-3-phospho-L-serine + H2O = sn-glycero-3-phospho-L-serine + (9Z)-octadecenoate + H(+). It carries out the reaction 1-(9Z-octadecenoyl)-sn-glycero-3-phospho-(1'-sn-glycerol) + H2O = sn-glycero-3-phospho-(1'-sn-glycerol) + (9Z)-octadecenoate + H(+). It catalyses the reaction 1-(9Z-octadecenoyl)-sn-glycero-3-phospho-(1D-myo-inositol) + H2O = sn-glycero-3-phospho-1D-myo-inositol + (9Z)-octadecenoate + H(+). The catalysed reaction is 1-(9Z-octadecenoyl)-sn-glycero-3-phosphoethanolamine + H2O = sn-glycero-3-phosphoethanolamine + (9Z)-octadecenoate + H(+). The enzyme catalyses 1-(9Z-octadecenoyl)-sn-glycero-3-phosphocholine + H2O = 1-(9Z-octadecenoyl)-sn-glycerol + phosphocholine + H(+). It carries out the reaction 2-(9Z-octadecenoyl)-glycerol + H2O = glycerol + (9Z)-octadecenoate + H(+). It catalyses the reaction 1-hexadecanoyl-sn-glycero-3-phospho-L-serine + H2O = sn-glycero-3-phospho-L-serine + hexadecanoate + H(+). The catalysed reaction is 2-(5Z,8Z,11Z,14Z-eicosatetraenoyl)-glycerol + H2O = glycerol + (5Z,8Z,11Z,14Z)-eicosatetraenoate + H(+). The enzyme catalyses Hydrolyzes glycerol monoesters of long-chain fatty acids.. It carries out the reaction 1-decanoylglycerol + H2O = decanoate + glycerol + H(+). It catalyses the reaction 1-dodecanoylglycerol + H2O = dodecanoate + glycerol + H(+). The catalysed reaction is 1-tetradecanoylglycerol + H2O = tetradecanoate + glycerol + H(+). The enzyme catalyses 2-hexadecanoylglycerol + H2O = glycerol + hexadecanoate + H(+). It carries out the reaction 1-(9Z-octadecenoyl)-glycerol + H2O = glycerol + (9Z)-octadecenoate + H(+). It catalyses the reaction 2-(9Z,12Z-octadecadienoyl)-glycerol + H2O = (9Z,12Z)-octadecadienoate + glycerol + H(+). The catalysed reaction is 1-(5Z,8Z,11Z,14Z-eicosatetraenoyl)-glycerol + H2O = glycerol + (5Z,8Z,11Z,14Z)-eicosatetraenoate + H(+). The enzyme catalyses 1-(9Z,12Z-octadecadienoyl)-glycerol + H2O = (9Z,12Z)-octadecadienoate + glycerol + H(+). It carries out the reaction 1-hexadecanoylglycerol + H2O = glycerol + hexadecanoate + H(+). It catalyses the reaction 1-octadecanoylglycerol + H2O = octadecanoate + glycerol + H(+). The catalysed reaction is 1-octadecanoyl-2-(9,10-epoxyoctadecanoyl)-sn-glycero-3-phospho-L-serine + H2O = 9,10-epoxyoctadecanoate + 1-octadecanoyl-sn-glycero-3-phosphoserine + H(+). The enzyme catalyses 1-octadecanoyl-2-(10-hydroxyoctadecanoyl)-sn-glycero-3-phospho-L-serine + H2O = 1-octadecanoyl-sn-glycero-3-phosphoserine + 10-hydroxyoctadecanoate + H(+). It carries out the reaction 1-hexadecanoyl-2-(10-hydroxyoctadecanoyl)-sn-glycero-3-phospho-L-serine + H2O = 10-hydroxyoctadecanoate + 1-hexadecanoyl-sn-glycero-3-phospho-L-serine + H(+). Functionally, lysophosphatidylserine (LPS) lipase that mediates the hydrolysis of lysophosphatidylserine, a class of signaling lipids that regulates immunological and neurological processes. Represents a major lysophosphatidylserine lipase in the brain, thereby playing a key role in the central nervous system. Also able to hydrolyze oxidized phosphatidylserine; oxidized phosphatidylserine is produced in response to severe inflammatory stress and constitutes a proapoptotic 'eat me' signal. Also has monoacylglycerol (MAG) lipase activity: hydrolyzes 2-arachidonoylglycerol (2-AG), thereby acting as a regulator of endocannabinoid signaling pathways. Has a strong preference for very-long-chain lipid substrates; substrate specificity is likely due to improved catalysis and not improved substrate binding. The sequence is that of Lysophosphatidylserine lipase ABHD12 from Rattus norvegicus (Rat).